Here is a 96-residue protein sequence, read N- to C-terminus: Venom protein 3.1 (96 aa).

A signal peptide spans 1–25 (MKFSLISVFLFAVFLSNENIFQAIA). Residues 45-84 (EAVMSSSLTNEEESRNWPHRATRNTLEKGQKRSPAARSEI) form a disordered region.

This sequence belongs to the non-disulfide-bridged peptide (NDBP) superfamily. In terms of tissue distribution, expressed by the venom gland.

The protein localises to the secreted. In Lychas mucronatus (Chinese swimming scorpion), this protein is Venom protein 3.1.